The sequence spans 388 residues: Alanine racemase 1 (388 aa).

The active-site Proton acceptor; specific for D-alanine is lysine 40. Lysine 40 carries the N6-(pyridoxal phosphate)lysine modification. Substrate is bound at residue arginine 138. The active-site Proton acceptor; specific for L-alanine is the tyrosine 268. Residue methionine 316 coordinates substrate.

It belongs to the alanine racemase family. The cofactor is pyridoxal 5'-phosphate.

The catalysed reaction is L-alanine = D-alanine. The protein operates within amino-acid biosynthesis; D-alanine biosynthesis; D-alanine from L-alanine: step 1/1. Catalyzes the interconversion of L-alanine and D-alanine. May also act on other amino acids. The sequence is that of Alanine racemase 1 (alr1) from Caldanaerobacter subterraneus subsp. tengcongensis (strain DSM 15242 / JCM 11007 / NBRC 100824 / MB4) (Thermoanaerobacter tengcongensis).